The sequence spans 338 residues: tRNA-specific 2-thiouridylase MnmA (338 aa).

ATP is bound by residues 6-13 (AMSGGVDS) and Met32. Cys92 (nucleophile) is an active-site residue. Cys92 and Cys186 are disulfide-bonded. Residue Gly116 participates in ATP binding. The tract at residues 134 to 136 (KDQ) is interaction with tRNA. Cys186 functions as the Cysteine persulfide intermediate in the catalytic mechanism. The segment at 288-289 (RY) is interaction with tRNA.

The protein belongs to the MnmA/TRMU family.

The protein resides in the cytoplasm. The enzyme catalyses S-sulfanyl-L-cysteinyl-[protein] + uridine(34) in tRNA + AH2 + ATP = 2-thiouridine(34) in tRNA + L-cysteinyl-[protein] + A + AMP + diphosphate + H(+). Functionally, catalyzes the 2-thiolation of uridine at the wobble position (U34) of tRNA, leading to the formation of s(2)U34. The protein is tRNA-specific 2-thiouridylase MnmA of Campylobacter jejuni subsp. jejuni serotype O:2 (strain ATCC 700819 / NCTC 11168).